Consider the following 147-residue polypeptide: Large ribosomal subunit protein uL15 (147 aa).

Residues 1-58 are disordered; it reads MRLHDLKPAEGSTKKKKRVGRGIGSGHGKTSGRGHKGQNARSGGGVRPGFEGGQMPLT. Residues 42–52 show a composition bias toward gly residues; that stretch reads SGGGVRPGFEG.

The protein belongs to the universal ribosomal protein uL15 family. As to quaternary structure, part of the 50S ribosomal subunit.

In terms of biological role, binds to the 23S rRNA. This is Large ribosomal subunit protein uL15 from Caldanaerobacter subterraneus subsp. tengcongensis (strain DSM 15242 / JCM 11007 / NBRC 100824 / MB4) (Thermoanaerobacter tengcongensis).